We begin with the raw amino-acid sequence, 239 residues long: Type II restriction enzyme Eco47II (239 aa).

The enzyme catalyses Endonucleolytic cleavage of DNA to give specific double-stranded fragments with terminal 5'-phosphates.. Its function is as follows. A P subtype restriction enzyme that recognizes the double-stranded sequence 5'-GGNCC-3'; the cleavage site is unknown. This Escherichia coli protein is Type II restriction enzyme Eco47II.